We begin with the raw amino-acid sequence, 499 residues long: Bifunctional NAD(P)H-hydrate repair enzyme Nnr (499 aa).

Residues 1–217 (MFITSKEMRR…PEIAERICGP (217 aa)) are NAD(P)H-hydrate epimerase. Positions 8–213 (MRRIELNSRW…NAGIPEIAER (206 aa)) constitute a YjeF N-terminal domain. Positions 54–58 (GNGGD) are NADPHX 1; for epimerase activity. Residues Asn55 and Asp124 each contribute to the K(+) site. Residues 128–134 (GFGIRGR) are NADPHX 1; for epimerase activity. Asp160 provides a ligand contact to (6S)-NADPHX. Thr163 provides a ligand contact to K(+). The YjeF C-terminal domain maps to 217-485 (PGDLITSDIW…EYVPKVLRNP (269 aa)). Residues 217 to 499 (PGDLITSDIW…PEAVTEVRRD (283 aa)) form an ADP-dependent (S)-NAD(P)H-hydrate dehydratase region. Residue Gly314 participates in (6S)-NADPHX binding. The segment at 360–366 (HAGEFRR) is NADPHX 2; for dehydratase activity. Residues 397-401 (KGRVD) and 417-426 (TPAMTVGGTG) contribute to the ADP site. Asp427 contributes to the (6S)-NADPHX binding site.

It in the N-terminal section; belongs to the NnrE/AIBP family. In the C-terminal section; belongs to the NnrD/CARKD family. The cofactor is K(+).

The catalysed reaction is (6S)-NADHX + ADP = AMP + phosphate + NADH + H(+). It carries out the reaction (6S)-NADPHX + ADP = AMP + phosphate + NADPH + H(+). The enzyme catalyses (6R)-NADHX = (6S)-NADHX. It catalyses the reaction (6R)-NADPHX = (6S)-NADPHX. In terms of biological role, bifunctional enzyme that catalyzes the epimerization of the S- and R-forms of NAD(P)HX and the dehydration of the S-form of NAD(P)HX at the expense of ADP, which is converted to AMP. This allows the repair of both epimers of NAD(P)HX, a damaged form of NAD(P)H that is a result of enzymatic or heat-dependent hydration. In Methanopyrus kandleri (strain AV19 / DSM 6324 / JCM 9639 / NBRC 100938), this protein is Bifunctional NAD(P)H-hydrate repair enzyme Nnr (nnr).